A 69-amino-acid polypeptide reads, in one-letter code: Beta-defensin 114 (69 aa).

The first 26 residues, 1-26 (MRIFYYLHFLCYVTFILPATCTLVNA), serve as a signal peptide directing secretion. 3 cysteine pairs are disulfide-bonded: Cys29/Cys57, Cys36/Cys50, and Cys40/Cys58.

Belongs to the beta-defensin family. In terms of tissue distribution, expressed in epididymis, predominantly in the caput (at protein level).

The protein localises to the secreted. Functionally, has a salt-sensitive antimicrobial activity against Gram-negative bacteria, including E.coli, Gram-positive, including S.aureus, and fungi, including C.albicans. Binds to and neutralizes bacterial lipopolysaccharides (LPS), abolishing TNF production by macrophages challenged with LPS. Rescues the LPS-induced reduction of sperm motility in vitro and may protect from LPS-induced lethality. This chain is Beta-defensin 114 (DEFB114), found in Homo sapiens (Human).